A 308-amino-acid polypeptide reads, in one-letter code: Tetraacyldisaccharide 4'-kinase (308 aa).

63-70 (SFGGNGKT) is an ATP binding site.

Belongs to the LpxK family.

It carries out the reaction a lipid A disaccharide + ATP = a lipid IVA + ADP + H(+). It participates in glycolipid biosynthesis; lipid IV(A) biosynthesis; lipid IV(A) from (3R)-3-hydroxytetradecanoyl-[acyl-carrier-protein] and UDP-N-acetyl-alpha-D-glucosamine: step 6/6. Its function is as follows. Transfers the gamma-phosphate of ATP to the 4'-position of a tetraacyldisaccharide 1-phosphate intermediate (termed DS-1-P) to form tetraacyldisaccharide 1,4'-bis-phosphate (lipid IVA). This is Tetraacyldisaccharide 4'-kinase from Campylobacter jejuni subsp. doylei (strain ATCC BAA-1458 / RM4099 / 269.97).